The following is a 405-amino-acid chain: Argininosuccinate synthase (405 aa).

ATP is bound by residues 10–18 (AYSGGLDTS) and Ala-37. L-citrulline is bound by residues Tyr-88 and Ser-93. Gly-118 contributes to the ATP binding site. Residues Thr-120, Asn-124, and Asp-125 each coordinate L-aspartate. Residue Asn-124 coordinates L-citrulline. Positions 128, 179, 188, 264, and 276 each coordinate L-citrulline.

This sequence belongs to the argininosuccinate synthase family. Type 1 subfamily. In terms of assembly, homotetramer.

Its subcellular location is the cytoplasm. The enzyme catalyses L-citrulline + L-aspartate + ATP = 2-(N(omega)-L-arginino)succinate + AMP + diphosphate + H(+). The protein operates within amino-acid biosynthesis; L-arginine biosynthesis; L-arginine from L-ornithine and carbamoyl phosphate: step 2/3. In Pseudomonas fluorescens (strain Pf0-1), this protein is Argininosuccinate synthase.